The primary structure comprises 334 residues: Holliday junction branch migration complex subunit RuvB (334 aa).

The large ATPase domain (RuvB-L) stretch occupies residues 4–184; sequence ADRLIQPQLQ…FGIPLRLEFY (181 aa). ATP contacts are provided by residues Arg-24, Gly-65, Lys-68, Thr-69, Thr-70, 131 to 133, Arg-174, Tyr-184, and Arg-221; that span reads EDY. A Mg(2+)-binding site is contributed by Thr-69. The segment at 185–255 is small ATPAse domain (RuvB-S); that stretch reads NVKDLSTIVT…VAEHALDLLD (71 aa). Positions 258–334 are head domain (RuvB-H); that stretch reads GEGFDYMDRK…YLHFGMIKPE (77 aa). Residues Arg-294, Arg-313, and Arg-318 each contribute to the DNA site.

It belongs to the RuvB family. In terms of assembly, homohexamer. Forms an RuvA(8)-RuvB(12)-Holliday junction (HJ) complex. HJ DNA is sandwiched between 2 RuvA tetramers; dsDNA enters through RuvA and exits via RuvB. An RuvB hexamer assembles on each DNA strand where it exits the tetramer. Each RuvB hexamer is contacted by two RuvA subunits (via domain III) on 2 adjacent RuvB subunits; this complex drives branch migration. In the full resolvosome a probable DNA-RuvA(4)-RuvB(12)-RuvC(2) complex forms which resolves the HJ.

The protein localises to the cytoplasm. It carries out the reaction ATP + H2O = ADP + phosphate + H(+). In terms of biological role, the RuvA-RuvB-RuvC complex processes Holliday junction (HJ) DNA during genetic recombination and DNA repair, while the RuvA-RuvB complex plays an important role in the rescue of blocked DNA replication forks via replication fork reversal (RFR). RuvA specifically binds to HJ cruciform DNA, conferring on it an open structure. The RuvB hexamer acts as an ATP-dependent pump, pulling dsDNA into and through the RuvAB complex. RuvB forms 2 homohexamers on either side of HJ DNA bound by 1 or 2 RuvA tetramers; 4 subunits per hexamer contact DNA at a time. Coordinated motions by a converter formed by DNA-disengaged RuvB subunits stimulates ATP hydrolysis and nucleotide exchange. Immobilization of the converter enables RuvB to convert the ATP-contained energy into a lever motion, pulling 2 nucleotides of DNA out of the RuvA tetramer per ATP hydrolyzed, thus driving DNA branch migration. The RuvB motors rotate together with the DNA substrate, which together with the progressing nucleotide cycle form the mechanistic basis for DNA recombination by continuous HJ branch migration. Branch migration allows RuvC to scan DNA until it finds its consensus sequence, where it cleaves and resolves cruciform DNA. In Shewanella sp. (strain MR-4), this protein is Holliday junction branch migration complex subunit RuvB.